The following is a 634-amino-acid chain: Chaperone protein HtpG (634 aa).

Residues 1–342 are a; substrate-binding; that stretch reads MSVETQKETL…SNDLSLNVSR (342 aa). The segment at 343–559 is b; sequence EILQKDPVID…EQDLGLQMRQ (217 aa). A c region spans residues 560–634; the sequence is ILEASGQKVP…LNKLLVELSA (75 aa).

Belongs to the heat shock protein 90 family. Homodimer.

It is found in the cytoplasm. In terms of biological role, molecular chaperone. Has ATPase activity. This is Chaperone protein HtpG from Pseudomonas paraeruginosa (strain DSM 24068 / PA7) (Pseudomonas aeruginosa (strain PA7)).